The chain runs to 304 residues: Glutaminase (304 aa).

Residues Ser63, Asn114, Glu158, Asn165, Tyr189, Tyr240, and Val258 each contribute to the substrate site.

It belongs to the glutaminase family. In terms of assembly, homotetramer.

It carries out the reaction L-glutamine + H2O = L-glutamate + NH4(+). The chain is Glutaminase from Shewanella oneidensis (strain ATCC 700550 / JCM 31522 / CIP 106686 / LMG 19005 / NCIMB 14063 / MR-1).